The primary structure comprises 410 residues: LL-diaminopimelate aminotransferase (410 aa).

The substrate site is built by tyrosine 15 and glycine 42. Pyridoxal 5'-phosphate contacts are provided by residues tyrosine 72, 108-109 (AK), tyrosine 132, asparagine 188, tyrosine 219, and 247-249 (SFS). The substrate site is built by lysine 109, tyrosine 132, and asparagine 188. Position 250 is an N6-(pyridoxal phosphate)lysine (lysine 250). Residues arginine 258 and asparagine 293 each coordinate pyridoxal 5'-phosphate. Asparagine 293 and arginine 389 together coordinate substrate.

It belongs to the class-I pyridoxal-phosphate-dependent aminotransferase family. LL-diaminopimelate aminotransferase subfamily. Homodimer. It depends on pyridoxal 5'-phosphate as a cofactor.

The catalysed reaction is (2S,6S)-2,6-diaminopimelate + 2-oxoglutarate = (S)-2,3,4,5-tetrahydrodipicolinate + L-glutamate + H2O + H(+). Its pathway is amino-acid biosynthesis; L-lysine biosynthesis via DAP pathway; LL-2,6-diaminopimelate from (S)-tetrahydrodipicolinate (aminotransferase route): step 1/1. Involved in the synthesis of meso-diaminopimelate (m-DAP or DL-DAP), required for both lysine and peptidoglycan biosynthesis. Catalyzes the direct conversion of tetrahydrodipicolinate to LL-diaminopimelate. In Bacteroides fragilis (strain YCH46), this protein is LL-diaminopimelate aminotransferase.